We begin with the raw amino-acid sequence, 329 residues long: MSAYIIETLIKILILVAVFSALGGFATYIERKVLAYFQRRLGPCYVGPFGLLQVAADGIKLFTKEDIIPQGANKFIFTLAPIIAMVSAFVSMAPIPFFPNFTLFGYEIKPLISDINIGFLFFLAVGSAGIYAPILAGLASNNKYSLIGSARATIQLLSFEVVSTLTILAPLMVVGSLSLVEINHYQSGGFLDWLVFKQPLAFVLFLIASYAELNRTPFDLLEHEAEIVAGYCTEYSGLKWGMFFLAEYAHLFAFSFVISIVFFGGFNAWGFIPGGIAILIKAGFFVFLSMWVRATYPHVRPDQLMDMCWKIMLPLALLNIVLTGIIILI.

The next 9 membrane-spanning stretches (helical) occupy residues 9–29 (LIKILILVAVFSALGGFATYI), 42–62 (GPCYVGPFGLLQVAADGIKLF), 75–95 (FIFTLAPIIAMVSAFVSMAPI), 117–137 (IGFLFFLAVGSAGIYAPILAG), 154–174 (IQLLSFEVVSTLTILAPLMVV), 188–208 (GGFLDWLVFKQPLAFVLFLIA), 238–258 (LKWGMFFLAEYAHLFAFSFVI), 269–291 (WGFIPGGIAILIKAGFFVFLSMW), and 309–329 (WKIMLPLALLNIVLTGIIILI).

This sequence belongs to the complex I subunit 1 family. NDH-1 is composed of 14 different subunits. Subunits NuoA, H, J, K, L, M, N constitute the membrane sector of the complex.

It localises to the cell inner membrane. It catalyses the reaction a quinone + NADH + 5 H(+)(in) = a quinol + NAD(+) + 4 H(+)(out). NDH-1 shuttles electrons from NADH, via FMN and iron-sulfur (Fe-S) centers, to quinones in the respiratory chain. The immediate electron acceptor for the enzyme in this species is believed to be ubiquinone. Couples the redox reaction to proton translocation (for every two electrons transferred, four hydrogen ions are translocated across the cytoplasmic membrane), and thus conserves the redox energy in a proton gradient. This subunit may bind ubiquinone. This is NADH-quinone oxidoreductase subunit H from Helicobacter pylori (strain ATCC 700392 / 26695) (Campylobacter pylori).